Consider the following 150-residue polypeptide: Ribonuclease K6 (150 aa).

The first 23 residues, Met1–Ala23, serve as a signal peptide directing secretion. The active-site Proton acceptor is His38. Cystine bridges form between Cys46-Cys104, Cys60-Cys114, Cys78-Cys129, and Cys85-Cys92. A glycan (N-linked (GlcNAc...) asparagine) is linked at Asn55. Substrate-binding positions include Lys61–Thr65 and Lys86. Asn100 is a glycosylation site (N-linked (GlcNAc...) asparagine). Position 105 (Arg105) interacts with substrate. His145 (proton donor) is an active-site residue.

Belongs to the pancreatic ribonuclease family. In terms of assembly, interacts (via N-terminus) with bacterial lipopolysaccharide (LPS).

It is found in the secreted. The protein localises to the lysosome. The protein resides in the cytoplasmic granule. Its function is as follows. Ribonuclease which shows a preference for the pyrimidines uridine and cytosine. Has potent antibacterial activity against a range of Gram-positive and Gram-negative bacteria, including P.aeruginosa, A.baumanii, M.luteus, S.aureus, E.faecalis, E.faecium, S.saprophyticus and E.coli. Causes loss of bacterial membrane integrity, and also promotes agglutination of Gram-negative bacteria. Probably contributes to urinary tract sterility. Bactericidal activity is independent of RNase activity. This is Ribonuclease K6 (RNASE6) from Gorilla gorilla gorilla (Western lowland gorilla).